A 129-amino-acid chain; its full sequence is 4-amino-4-deoxychorismate mutase (129 aa).

The region spanning 16–107 is the Chorismate mutase domain; sequence AAATDPLDAL…ETCRLEDEWI (92 aa).

It catalyses the reaction 4-amino-4-deoxychorismate = 4-amino-4-deoxyprephenate. The protein operates within antibiotic biosynthesis. In terms of biological role, involved in pristinamycin I biosynthesis. Probably catalyzes the conversion of 4-amino-4-deoxychorismate to 4-amino-4-deoxyprephenate. The chain is 4-amino-4-deoxychorismate mutase from Streptomyces pristinaespiralis.